Here is a 192-residue protein sequence, read N- to C-terminus: Ribosomal RNA small subunit methyltransferase G (192 aa).

S-adenosyl-L-methionine contacts are provided by residues Gly-63, Leu-68, 112 to 113 (IE), and Arg-125.

This sequence belongs to the methyltransferase superfamily. RNA methyltransferase RsmG family.

Its subcellular location is the cytoplasm. It carries out the reaction guanosine(527) in 16S rRNA + S-adenosyl-L-methionine = N(7)-methylguanosine(527) in 16S rRNA + S-adenosyl-L-homocysteine. Functionally, specifically methylates the N7 position of guanine in position 527 of 16S rRNA. The sequence is that of Ribosomal RNA small subunit methyltransferase G from Rickettsia africae (strain ESF-5).